Consider the following 431-residue polypeptide: MSFLVSKPERIRRWVSEKFIVEGLRDLELFGEQPPGDTRRKANEASSESIASFSKPEMMSSFLPEGGCYELLTIIGKGFEDLMTVNLARYKPTGEYVTVRRINLEACSNEMVTFLQGELHVSKLFSHPNIVPYRATFIADNELWVVTSFMAYGSAKDLIGTHFMDGMNELAIAYILQGVLKALDYIHHMGYVHRSVKASHILISTDGKVYLSGLRSNLSMISHGQRQRAVHDFPKYSIKVLPWLSPEVLQQNLQGYDAKSDIYSVGITACELANGHVPFKDMPATQMLLEKLNGTVPCLLDTSTIPAEELTMSPSRSIANPGLNDSLAAGSLRPSNGDSPSHPYHRTFSPHFHNFVEQCLQRNPDARPNASTLLNHSFFKQIKRRASEALPELLRPVTPITNFEGSQSQDHSGIFGLVTNLEDLEVDDWEF.

2 positions are modified to phosphoserine: Ser2 and Ser46. Disordered regions lie at residues Glu32–Ser52 and Pro314–Tyr344. The Protein kinase domain maps to Tyr69–Phe379. Position 419 is a phosphothreonine; by LKB1 (Thr419).

This sequence belongs to the protein kinase superfamily. STE Ser/Thr protein kinase family. STE20 subfamily. Component of a trimeric complex composed of STK11/LKB1, STRAD (STRADA or STRADB) and CAB39/MO25 (CAB39/MO25alpha or CAB39L/MO25beta): the complex tethers STK11/LKB1 in the cytoplasm and stimulates its catalytic activity.

It is found in the nucleus. It localises to the cytoplasm. Its function is as follows. Pseudokinase which, in complex with CAB39/MO25 (CAB39/MO25alpha or CAB39L/MO25beta), binds to and activates STK11/LKB1. Adopts a closed conformation typical of active protein kinases and binds STK11/LKB1 as a pseudosubstrate, promoting conformational change of STK11/LKB1 in an active conformation. The polypeptide is STE20-related kinase adapter protein alpha (Strada) (Mus musculus (Mouse)).